The following is a 150-amino-acid chain: Arginine repressor (150 aa).

It belongs to the ArgR family.

The protein resides in the cytoplasm. It participates in amino-acid biosynthesis; L-arginine biosynthesis [regulation]. Regulates arginine biosynthesis genes. The protein is Arginine repressor of Symbiobacterium thermophilum (strain DSM 24528 / JCM 14929 / IAM 14863 / T).